The sequence spans 287 residues: Bifunctional protein FolD (287 aa).

Residues 160 to 162 (GRS), Ser189, and Thr230 each bind NADP(+).

Belongs to the tetrahydrofolate dehydrogenase/cyclohydrolase family. As to quaternary structure, homodimer.

It carries out the reaction (6R)-5,10-methylene-5,6,7,8-tetrahydrofolate + NADP(+) = (6R)-5,10-methenyltetrahydrofolate + NADPH. The enzyme catalyses (6R)-5,10-methenyltetrahydrofolate + H2O = (6R)-10-formyltetrahydrofolate + H(+). Its pathway is one-carbon metabolism; tetrahydrofolate interconversion. Catalyzes the oxidation of 5,10-methylenetetrahydrofolate to 5,10-methenyltetrahydrofolate and then the hydrolysis of 5,10-methenyltetrahydrofolate to 10-formyltetrahydrofolate. The protein is Bifunctional protein FolD of Chlamydia abortus (strain DSM 27085 / S26/3) (Chlamydophila abortus).